Here is a 1119-residue protein sequence, read N- to C-terminus: DNA-directed RNA polymerase subunit beta (1119 aa).

This sequence belongs to the RNA polymerase beta chain family. In terms of assembly, the RNAP catalytic core consists of 2 alpha, 1 beta, 1 beta' and 1 omega subunit. When a sigma factor is associated with the core the holoenzyme is formed, which can initiate transcription.

The enzyme catalyses RNA(n) + a ribonucleoside 5'-triphosphate = RNA(n+1) + diphosphate. DNA-dependent RNA polymerase catalyzes the transcription of DNA into RNA using the four ribonucleoside triphosphates as substrates. The sequence is that of DNA-directed RNA polymerase subunit beta from Thermus aquaticus.